The chain runs to 158 residues: Dysbindin domain-containing protein 2 (158 aa).

The interval F79 to S158 is disordered. The span at P106 to S131 shows a compositional bias: low complexity. Phosphoserine occurs at positions 119 and 120. T137 carries the post-translational modification Phosphothreonine. S142 bears the Phosphoserine mark. The span at S142–G151 shows a compositional bias: acidic residues.

Belongs to the dysbindin family. In terms of assembly, monomer. Interacts with CSNK1D and CSNK1E.

May modulate the activity of casein kinase-1. Inhibits CSNK1D autophosphorylation (in vitro). The chain is Dysbindin domain-containing protein 2 (Dbndd2) from Mus musculus (Mouse).